The following is a 435-amino-acid chain: NADH-quinone oxidoreductase subunit D (435 aa).

The protein belongs to the complex I 49 kDa subunit family. In terms of assembly, NDH-1 is composed of 14 different subunits. Subunits NuoB, C, D, E, F, and G constitute the peripheral sector of the complex.

It is found in the cell inner membrane. It catalyses the reaction a quinone + NADH + 5 H(+)(in) = a quinol + NAD(+) + 4 H(+)(out). Functionally, NDH-1 shuttles electrons from NADH, via FMN and iron-sulfur (Fe-S) centers, to quinones in the respiratory chain. The immediate electron acceptor for the enzyme in this species is believed to be ubiquinone. Couples the redox reaction to proton translocation (for every two electrons transferred, four hydrogen ions are translocated across the cytoplasmic membrane), and thus conserves the redox energy in a proton gradient. The protein is NADH-quinone oxidoreductase subunit D of Xylella fastidiosa (strain M12).